Here is a 329-residue protein sequence, read N- to C-terminus: Interleukin-12 subunit beta (329 aa).

The first 22 residues, 1-22, serve as a signal peptide directing secretion; it reads MHPQQLVIAWLSLVLLAPPLMA. Residues 23 to 106 enclose the Ig-like C2-type domain; that stretch reads IWELEKNVYV…LSHSFLLIHK (84 aa). An intrachain disulfide couples cysteine 50 to cysteine 90. N-linked (GlcNAc...) asparagine glycans are attached at residues asparagine 135 and asparagine 223. One can recognise a Fibronectin type-III domain in the interval 238–329; the sequence is PPKNLQLKPL…WSNWASVSCS (92 aa).

This sequence belongs to the IL-12B family. As to quaternary structure, heterodimer with IL12A; disulfide-linked. The heterodimer is known as interleukin IL-12. Heterodimer with IL23A; disulfide-linked. The heterodimer is known as interleukin IL-23. Also secreted as a monomer. Interacts with NBR1; this interaction promotes IL-12 secretion.

The protein localises to the secreted. Functionally, cytokine that can act as a growth factor for activated T and NK cells, enhance the lytic activity of NK/lymphokine-activated killer cells, and stimulate the production of IFN-gamma by resting PBMC. Associates with IL23A to form the IL-23 interleukin, a heterodimeric cytokine which functions in innate and adaptive immunity. IL-23 may constitute with IL-17 an acute response to infection in peripheral tissues. IL-23 binds to a heterodimeric receptor complex composed of IL12RB1 and IL23R, activates the Jak-Stat signaling cascade, stimulates memory rather than naive T-cells and promotes production of pro-inflammatory cytokines. IL-23 induces autoimmune inflammation and thus may be responsible for autoimmune inflammatory diseases and may be important for tumorigenesis. This Felis catus (Cat) protein is Interleukin-12 subunit beta (IL12B).